The primary structure comprises 64 residues: Large ribosomal subunit protein bL35 (64 aa).

Residues 1-55 are disordered; sequence MPKMKTNKSVSARFKLTASGQLKRTRPGKRHKLSKKSSQEKRNLSKQPLVDKGQV. Basic residues predominate over residues 23 to 35; the sequence is KRTRPGKRHKLSK.

This sequence belongs to the bacterial ribosomal protein bL35 family.

The polypeptide is Large ribosomal subunit protein bL35 (Chlamydia pneumoniae (Chlamydophila pneumoniae)).